The chain runs to 202 residues: Small ribosomal subunit protein uS4c (202 aa).

The interval 20–43 (GLTRKTTRRNSRPGQHGDQPRKPS) is disordered. The region spanning 90-152 (MRLDNIVFRL…ARSKQLVENY (63 aa)) is the S4 RNA-binding domain.

The protein belongs to the universal ribosomal protein uS4 family. Part of the 30S ribosomal subunit. Contacts protein S5. The interaction surface between S4 and S5 is involved in control of translational fidelity.

It is found in the plastid. The protein resides in the chloroplast. One of the primary rRNA binding proteins, it binds directly to 16S rRNA where it nucleates assembly of the body of the 30S subunit. In terms of biological role, with S5 and S12 plays an important role in translational accuracy. In Rhodomonas salina (Cryptomonas salina), this protein is Small ribosomal subunit protein uS4c (rps4).